Here is a 225-residue protein sequence, read N- to C-terminus: UPF0758 protein swp_2203 (225 aa).

The 123-residue stretch at 102–224 (ILSDPDLTRD…IVSFAERGWI (123 aa)) folds into the MPN domain. Zn(2+) is bound by residues H173, H175, and D186. The short motif at 173–186 (HNHPSGIAEPSTAD) is the JAMM motif element.

Belongs to the UPF0758 family.

In Shewanella piezotolerans (strain WP3 / JCM 13877), this protein is UPF0758 protein swp_2203.